A 37-amino-acid chain; its full sequence is Esculentin-2Ra (37 aa).

C31 and C37 are oxidised to a cystine.

Expressed by the skin glands.

It is found in the secreted. Functionally, antimicrobial peptide. The polypeptide is Esculentin-2Ra (Pelophylax ridibundus (Marsh frog)).